The chain runs to 314 residues: Ribonuclease Z (314 aa).

Positions 61, 63, 65, 66, 137, 207, and 263 each coordinate Zn(2+). The active-site Proton acceptor is Asp65.

Belongs to the RNase Z family. In terms of assembly, homodimer. Zn(2+) is required as a cofactor.

It catalyses the reaction Endonucleolytic cleavage of RNA, removing extra 3' nucleotides from tRNA precursor, generating 3' termini of tRNAs. A 3'-hydroxy group is left at the tRNA terminus and a 5'-phosphoryl group is left at the trailer molecule.. Its function is as follows. Zinc phosphodiesterase, which displays some tRNA 3'-processing endonuclease activity. Probably involved in tRNA maturation, by removing a 3'-trailer from precursor tRNA. The polypeptide is Ribonuclease Z (Thermococcus gammatolerans (strain DSM 15229 / JCM 11827 / EJ3)).